The chain runs to 315 residues: Neuroguidin (315 aa).

2 disordered regions span residues 127-201 (SEND…KQKR) and 289-315 (VQDI…RKRK). Basic and acidic residues-rich tracts occupy residues 159-168 (KTKEQKEPSG) and 182-200 (YDGD…EKQK). The stretch at 181–206 (HYDGDLTEADRQKERVEKQKRAALRS) forms a coiled coil. Positions 296 to 315 (KPKKKKIIKKGKKKVFRKRK) are enriched in basic residues.

The protein belongs to the SAS10 family. Part of the small subunit (SSU) processome, composed of more than 70 proteins and the RNA chaperone small nucleolar RNA (snoRNA) U3.

The protein resides in the nucleus. It localises to the nucleolus. It is found in the chromosome. Its subcellular location is the centromere. The protein localises to the cytoplasm. The protein resides in the cell projection. It localises to the axon. It is found in the dendrite. Its subcellular location is the filopodium. Part of the small subunit (SSU) processome, first precursor of the small eukaryotic ribosomal subunit. During the assembly of the SSU processome in the nucleolus, many ribosome biogenesis factors, an RNA chaperone and ribosomal proteins associate with the nascent pre-rRNA and work in concert to generate RNA folding, modifications, rearrangements and cleavage as well as targeted degradation of pre-ribosomal RNA by the RNA exosome. Its dissociation from the complex determines the transition from state pre-A1 to state pre-A1*. May inhibit mRNA translation. This chain is Neuroguidin (ngdn), found in Danio rerio (Zebrafish).